Here is a 431-residue protein sequence, read N- to C-terminus: Serine--tRNA ligase (431 aa).

The segment at 41–66 (QSRTQELQAERNARSKSIGEAARRGE) is disordered. 240-242 (TSE) lines the L-serine pocket. Position 271-273 (271-273 (RSE)) interacts with ATP. Glu294 provides a ligand contact to L-serine. 358–361 (EISS) lines the ATP pocket. Ser392 is a binding site for L-serine.

It belongs to the class-II aminoacyl-tRNA synthetase family. Type-1 seryl-tRNA synthetase subfamily. Homodimer. The tRNA molecule binds across the dimer.

The protein resides in the cytoplasm. The catalysed reaction is tRNA(Ser) + L-serine + ATP = L-seryl-tRNA(Ser) + AMP + diphosphate + H(+). The enzyme catalyses tRNA(Sec) + L-serine + ATP = L-seryl-tRNA(Sec) + AMP + diphosphate + H(+). It participates in aminoacyl-tRNA biosynthesis; selenocysteinyl-tRNA(Sec) biosynthesis; L-seryl-tRNA(Sec) from L-serine and tRNA(Sec): step 1/1. Its function is as follows. Catalyzes the attachment of serine to tRNA(Ser). Is also able to aminoacylate tRNA(Sec) with serine, to form the misacylated tRNA L-seryl-tRNA(Sec), which will be further converted into selenocysteinyl-tRNA(Sec). The polypeptide is Serine--tRNA ligase (Aeromonas salmonicida (strain A449)).